The primary structure comprises 332 residues: DNA-directed RNA polymerase 2A (332 aa).

Catalysis depends on residues Asp-33, Lys-108, and Asp-265.

The protein belongs to the phage and mitochondrial RNA polymerase family.

It catalyses the reaction RNA(n) + a ribonucleoside 5'-triphosphate = RNA(n+1) + diphosphate. In terms of biological role, DNA-dependent RNA polymerase catalyzes the transcription of DNA into RNA using the four ribonucleoside triphosphates as substrates. The polypeptide is DNA-directed RNA polymerase 2A (RPOT2-SYL) (Nicotiana tabacum (Common tobacco)).